Consider the following 143-residue polypeptide: Large ribosomal subunit protein uL11 (143 aa).

It belongs to the universal ribosomal protein uL11 family. In terms of assembly, part of the ribosomal stalk of the 50S ribosomal subunit. Interacts with L10 and the large rRNA to form the base of the stalk. L10 forms an elongated spine to which L12 dimers bind in a sequential fashion forming a multimeric L10(L12)X complex. Post-translationally, one or more lysine residues are methylated.

Forms part of the ribosomal stalk which helps the ribosome interact with GTP-bound translation factors. This chain is Large ribosomal subunit protein uL11, found in Treponema denticola (strain ATCC 35405 / DSM 14222 / CIP 103919 / JCM 8153 / KCTC 15104).